A 459-amino-acid polypeptide reads, in one-letter code: Argininosuccinate lyase (459 aa).

The protein belongs to the lyase 1 family. Argininosuccinate lyase subfamily.

It is found in the cytoplasm. It carries out the reaction 2-(N(omega)-L-arginino)succinate = fumarate + L-arginine. It participates in amino-acid biosynthesis; L-arginine biosynthesis; L-arginine from L-ornithine and carbamoyl phosphate: step 3/3. This chain is Argininosuccinate lyase, found in Buchnera aphidicola subsp. Schizaphis graminum (strain Sg).